The following is a 201-amino-acid chain: Dephospho-CoA kinase (201 aa).

A DPCK domain is found at 3-201 (WIGLTGGIAC…KWLEELKNQN (199 aa)). 11-16 (ACGKST) is a binding site for ATP.

Belongs to the CoaE family.

The protein localises to the cytoplasm. It catalyses the reaction 3'-dephospho-CoA + ATP = ADP + CoA + H(+). It participates in cofactor biosynthesis; coenzyme A biosynthesis; CoA from (R)-pantothenate: step 5/5. Its function is as follows. Catalyzes the phosphorylation of the 3'-hydroxyl group of dephosphocoenzyme A to form coenzyme A. This is Dephospho-CoA kinase from Bdellovibrio bacteriovorus (strain ATCC 15356 / DSM 50701 / NCIMB 9529 / HD100).